Here is a 352-residue protein sequence, read N- to C-terminus: Putative hetero-Diels-Alderase (352 aa).

The first 20 residues, 1 to 20 (MRYHLSALVLVFTAFRETLT), serve as a signal peptide directing secretion. Asparagine 26, asparagine 41, asparagine 47, asparagine 135, asparagine 211, and asparagine 310 each carry an N-linked (GlcNAc...) asparagine glycan.

This sequence belongs to the eupF Diels-Alderase family.

Its pathway is secondary metabolite biosynthesis; terpenoid biosynthesis. Functionally, putative hetero-Diels-Alderase; part of the gene cluster that mediates the biosynthesis of eupenifeldin, a bistropolone meroterpenoid that acts as an antitumor agent. The first step of eupenifeldin biosynthesis is the biosynthesis of 3-methylorcinaldehyde performed by the non-reducing polyketide synthase eupA. Oxidative dearomatization of 3-methylorcinaldehyde likely catalyzed by the FAD-dependent monooxygenase eupB is followed by oxidative ring expansion by the 2-oxoglutarate-dependent dioxygenase eupC to provide the first tropolone metabolite, tropolone stipitaldehyde. In parallel, generation of sesquiterpene alpha-humulene from farnesylpyrophosphate (FPP) is catalyzed by the terpene cyclase eupE. The cytochrome P450 monooxygenase eupD then hydroxylates humulene to humulenol. The putative Diels-Alderase eupF probably catalyzes the formation of the tropolone-humulene skeleton by linking humulenol and the polyketide moiety. The short-chain dehydrogenase/reductase eupG and the flavin-dependent monooxygenase eupH are also essential for eupenifeldin biosynthesis and are likely the additional decorating enzymes of the tropolone-humulene skeleton to produce final eupenifeldin or derivatives. This is Putative hetero-Diels-Alderase from Phoma sp.